We begin with the raw amino-acid sequence, 209 residues long: Protein Sxy (209 aa).

It belongs to the Sxy/TfoX family.

Its function is as follows. Induces low levels of natural DNA uptake by inducing transcription of the competence genes (the CRP-S regulon) required for DNA transformation. Induction of the CRP-S regulon also requires Sxy-activated promoter (CRP-S), cAMP receptor protein (CRP) and cAMP. Induces CRP-S site-containing genes which are involved in genome maintenance and transcription or encoding transposases and toxin-antitoxin pairs. This is Protein Sxy from Escherichia coli (strain K12).